Consider the following 231-residue polypeptide: N-acetylmuramate alpha-1-phosphate uridylyltransferase (231 aa).

Residues Gly-11–Arg-13 and Lys-23 contribute to the UTP site. Asn-106 is a binding site for substrate. Residue Asp-108 coordinates Mg(2+). Residues Asp-146 and Asp-213 each contribute to the substrate site. Residue Asp-213 coordinates Mg(2+).

It belongs to the nucleotidyltransferase MurU family. As to quaternary structure, monomer. Requires Mg(2+) as cofactor.

The catalysed reaction is N-acetyl-alpha-D-muramate 1-phosphate + UDP + H(+) = UDP-N-acetyl-alpha-D-muramate + phosphate. The protein operates within cell wall biogenesis; peptidoglycan recycling. Catalyzes the formation of UDP-N-acetylmuramate (UDP-MurNAc), a crucial precursor of the bacterial peptidoglycan cell wall, from UTP and MurNAc-alpha-1P. Is likely involved in peptidoglycan recycling as part of a cell wall recycling pathway that bypasses de novo biosynthesis of the peptidoglycan precursor UDP-MurNAc. Is able to complement the fosfomycin sensitivity phenotype of a P.putida mutant lacking murU. The protein is N-acetylmuramate alpha-1-phosphate uridylyltransferase of Neisseria meningitidis serogroup B (strain ATCC BAA-335 / MC58).